A 381-amino-acid polypeptide reads, in one-letter code: tRNA-specific 2-thiouridylase MnmA (381 aa).

ATP contacts are provided by residues 9–16 (GMSGGVDS) and methionine 35. Residues 95-97 (NPD) are interaction with target base in tRNA. The active-site Nucleophile is the cysteine 100. Cysteine 100 and cysteine 196 are oxidised to a cystine. Glycine 124 is a binding site for ATP. The segment at 146-148 (KDQ) is interaction with tRNA. The active-site Cysteine persulfide intermediate is cysteine 196. The segment at 308–309 (RY) is interaction with tRNA.

This sequence belongs to the MnmA/TRMU family.

It is found in the cytoplasm. It carries out the reaction S-sulfanyl-L-cysteinyl-[protein] + uridine(34) in tRNA + AH2 + ATP = 2-thiouridine(34) in tRNA + L-cysteinyl-[protein] + A + AMP + diphosphate + H(+). Catalyzes the 2-thiolation of uridine at the wobble position (U34) of tRNA, leading to the formation of s(2)U34. This is tRNA-specific 2-thiouridylase MnmA from Burkholderia multivorans (strain ATCC 17616 / 249).